The sequence spans 438 residues: Porin AaxA (438 aa).

Positions 1-21 (MISFRFLLLSGLCALGISSYA) are cleaved as a signal peptide.

It belongs to the OprB family.

The protein resides in the cell outer membrane. Its function is as follows. Facilitates L-arginine uptake, as part of the AaxABC system. The arginine uptake by the bacterium in the macrophage may be a virulence factor against the host innate immune response. The polypeptide is Porin AaxA (aaxA) (Chlamydia pneumoniae (Chlamydophila pneumoniae)).